The chain runs to 748 residues: Polyribonucleotide nucleotidyltransferase (748 aa).

Mg(2+) contacts are provided by Asp-487 and Asp-493. The KH domain maps to 554–613 (PSTTTIKIDKDKIRDIIGPSGKVIKEICETSGAKIDISDDGTVSVYASDRDKLKVALDKI). An S1 motif domain is found at 623-691 (GEIFNGTVVK…NKGKAKLTIK (69 aa)). Residues 693–733 (ADKDKSSNNTKPKTHVNNTKDNSEPEQRRDSSKKRAWNEDN) are disordered. Positions 699 to 712 (SNNTKPKTHVNNTK) are enriched in polar residues. Over residues 713-722 (DNSEPEQRRD) the composition is skewed to basic and acidic residues.

It belongs to the polyribonucleotide nucleotidyltransferase family. Mg(2+) is required as a cofactor.

It localises to the cytoplasm. It catalyses the reaction RNA(n+1) + phosphate = RNA(n) + a ribonucleoside 5'-diphosphate. Functionally, involved in mRNA degradation. Catalyzes the phosphorolysis of single-stranded polyribonucleotides processively in the 3'- to 5'-direction. In Rickettsia peacockii (strain Rustic), this protein is Polyribonucleotide nucleotidyltransferase.